Consider the following 632-residue polypeptide: Chaperone protein HtpG (632 aa).

The tract at residues 1–339 is a; substrate-binding; sequence MAHETMSFQA…SADLPLNVSR (339 aa). Positions 340-559 are b; the sequence is EILQESRDVK…DNDMSGYLQR (220 aa). Positions 560 to 632 are c; the sequence is MLKAAGQNAP…TNALLLSRAA (73 aa).

It belongs to the heat shock protein 90 family. As to quaternary structure, homodimer.

Its subcellular location is the cytoplasm. Functionally, molecular chaperone. Has ATPase activity. In Burkholderia cenocepacia (strain HI2424), this protein is Chaperone protein HtpG.